A 402-amino-acid chain; its full sequence is Zinc finger CCHC domain-containing protein 12 (402 aa).

The interval 308-341 (IDSPHNSRAQFPSTSGGSGYKNNGPGEMRRARKR) is disordered. Polar residues predominate over residues 311 to 322 (PHNSRAQFPSTS). Residues 345-362 (IRCSYCGEEGHSKETCDN) form a CCHC-type zinc finger.

The protein belongs to the ZCCHC12 family. Interacts with SMAD1 and CREB-binding protein (CBP). Forms a protein-DNA complex through its association with SMAD1.

In terms of biological role, transcriptional coactivator in the bone morphogenetic protein (BMP)-signaling pathway. It positively modulates BMP signaling by interacting with SMAD1 and associating with CBP in the transcription complex. It contributes to the BMP-induced enhancement of cholinergic-neuron-specific gene expression. The chain is Zinc finger CCHC domain-containing protein 12 (ZCCHC12) from Homo sapiens (Human).